The sequence spans 167 residues: NAD(P)H-quinone oxidoreductase subunit I, chloroplastic (167 aa).

4Fe-4S ferredoxin-type domains are found at residues Gly55–Lys84 and Leu95–Glu124. 8 residues coordinate [4Fe-4S] cluster: Cys64, Cys67, Cys70, Cys74, Cys104, Cys107, Cys110, and Cys114.

Belongs to the complex I 23 kDa subunit family. In terms of assembly, NDH is composed of at least 16 different subunits, 5 of which are encoded in the nucleus. The cofactor is [4Fe-4S] cluster.

It is found in the plastid. The protein resides in the chloroplast thylakoid membrane. It catalyses the reaction a plastoquinone + NADH + (n+1) H(+)(in) = a plastoquinol + NAD(+) + n H(+)(out). The enzyme catalyses a plastoquinone + NADPH + (n+1) H(+)(in) = a plastoquinol + NADP(+) + n H(+)(out). In terms of biological role, NDH shuttles electrons from NAD(P)H:plastoquinone, via FMN and iron-sulfur (Fe-S) centers, to quinones in the photosynthetic chain and possibly in a chloroplast respiratory chain. The immediate electron acceptor for the enzyme in this species is believed to be plastoquinone. Couples the redox reaction to proton translocation, and thus conserves the redox energy in a proton gradient. This chain is NAD(P)H-quinone oxidoreductase subunit I, chloroplastic, found in Vitis vinifera (Grape).